A 2809-amino-acid chain; its full sequence is Fibrillin-3 (2809 aa).

An N-terminal signal peptide occupies residues 1–31 (MTLEGLYLARGPLARLLLAWSALLCMAGGQG). A propeptide spanning residues 32–48 (RWDGALEAAGPGRVRRR) is cleaved from the precursor. Residues 147 to 179 (GQPICDRGCHNGGRCIGPNRCACVYGFMGPQCE) enclose the EGF-like 1 domain. Cystine bridges form between cysteine 151/cysteine 161, cysteine 155/cysteine 167, and cysteine 169/cysteine 178. The 53-residue stretch at 185–237 (GPCFGQVGPEGCQHQLTGLVCTKALCCATVGRAWGLPCELCPAQPHPCRRGFI) folds into the TB 1 domain. The EGF-like 2; calcium-binding domain maps to 247–288 (DVDECQAVPGLCQGGSCVNMVGSFHCRCPVGHRLSDSSAACE). Intrachain disulfides connect cysteine 251–cysteine 263, cysteine 258–cysteine 272, and cysteine 274–cysteine 287. Positions 293-346 (GACFSVLFGGRCAGDLAGHYTRRQCCCDRGRCWAAGPVPELCPPRGSNEFQQLC) constitute a TB 2 domain. An N-linked (GlcNAc...) asparagine glycan is attached at asparagine 406. The EGF-like 3 domain maps to 408-448 (TIDICRHFTNLCLNGRCLPTPSSYRCECNVGYTQDVRGECI). Disulfide bonds link cysteine 412-cysteine 424, cysteine 419-cysteine 433, cysteine 435-cysteine 447, cysteine 453-cysteine 463, cysteine 458-cysteine 472, cysteine 474-cysteine 487, cysteine 493-cysteine 505, cysteine 500-cysteine 514, cysteine 516-cysteine 529, cysteine 535-cysteine 546, cysteine 541-cysteine 555, cysteine 557-cysteine 570, cysteine 576-cysteine 587, cysteine 582-cysteine 596, and cysteine 598-cysteine 611. Residues 449–488 (DVDECTSSPCHHGDCVNIPGTYHCRCYPGFQATPTRQACV) enclose the EGF-like 4; calcium-binding domain. In terms of domain architecture, EGF-like 5; calcium-binding spans 489-530 (DVDECIVSGGLCHLGRCVNTEGSFQCVCNAGFELSPDGKNCV). Residues 531–571 (DHNECATSTMCVNGVCLNEDGSFSCLCKPGFLLAPGGHYCM) form the EGF-like 6; calcium-binding domain. One can recognise an EGF-like 7; calcium-binding domain in the interval 572-612 (DIDECQTPGICVNGHCTNTEGSFRCQCLGGLAVGTDGRVCV). In terms of domain architecture, TB 3 spans 618-670 (STCYGAIEKGSCARPFPGTVTKSECCCANPDHGFGEPCQLCPAKDSAEFQALC). The EGF-like 8; calcium-binding domain occupies 682-723 (DINECALDPEVCANGVCENLRGSYRCVCNLGYEAGASGKDCT). Intrachain disulfides connect cysteine 686–cysteine 698, cysteine 693–cysteine 707, cysteine 709–cysteine 722, cysteine 728–cysteine 740, cysteine 735–cysteine 749, cysteine 751–cysteine 764, cysteine 770–cysteine 780, cysteine 775–cysteine 789, and cysteine 791–cysteine 804. Positions 724–765 (DVDECALNSLLCDNGWCQNSPGSYSCSCPPGFHFWQDTEICK) constitute an EGF-like 9; calcium-binding domain. Residues 766–805 (DVDECLSSPCVSGVCRNLAGSYTCKCGPGSRLDPSGTFCL) enclose the EGF-like 10; calcium-binding domain. Positions 810 to 861 (GTCWLKIQESRCEVNLQGASLRSECCATLGAAWGSPCERCEIDPACARGFAR) constitute a TB 4 domain. The region spanning 869 to 910 (DVNECESFPGVCPNGRCVNTAGSFRCECPEGLMLDASGRLCV) is the EGF-like 11; calcium-binding domain. 3 disulfides stabilise this stretch: cysteine 873-cysteine 885, cysteine 880-cysteine 894, and cysteine 896-cysteine 909. The TB 5 domain maps to 915–966 (EPCFLRWDEDECGVTLPGKYRMDVCCCSIGAVWGVECEACPDPESLEFASLC). One can recognise an EGF-like 12; calcium-binding domain in the interval 986-1027 (DVNECKVFPGLCTHGTCRNTVGSFHCACAGGFALDAQERNCT). 36 disulfide bridges follow: cysteine 990–cysteine 1002, cysteine 997–cysteine 1011, cysteine 1013–cysteine 1026, cysteine 1032–cysteine 1044, cysteine 1039–cysteine 1053, cysteine 1055–cysteine 1069, cysteine 1075–cysteine 1087, cysteine 1082–cysteine 1096, cysteine 1098–cysteine 1111, cysteine 1117–cysteine 1129, cysteine 1124–cysteine 1138, cysteine 1140–cysteine 1153, cysteine 1159–cysteine 1170, cysteine 1166–cysteine 1179, cysteine 1181–cysteine 1194, cysteine 1200–cysteine 1212, cysteine 1207–cysteine 1221, cysteine 1223–cysteine 1236, cysteine 1242–cysteine 1254, cysteine 1249–cysteine 1263, cysteine 1265–cysteine 1278, cysteine 1284–cysteine 1297, cysteine 1291–cysteine 1306, cysteine 1308–cysteine 1319, cysteine 1325–cysteine 1338, cysteine 1332–cysteine 1347, cysteine 1349–cysteine 1360, cysteine 1366–cysteine 1378, cysteine 1373–cysteine 1387, cysteine 1389–cysteine 1402, cysteine 1408–cysteine 1419, cysteine 1414–cysteine 1428, cysteine 1430–cysteine 1443, cysteine 1449–cysteine 1460, cysteine 1455–cysteine 1469, and cysteine 1471–cysteine 1484. Residue asparagine 1025 is glycosylated (N-linked (GlcNAc...) asparagine). The region spanning 1028–1070 (DIDECRISPDLCGQGTCVNTPGSFECECFPGYESGFMLMKNCM) is the EGF-like 13; calcium-binding domain. Positions 1071–1112 (DVDECARDPLLCRGGTCTNTDGSYKCQCPPGHELTAKGTACE) constitute an EGF-like 14; calcium-binding domain. In terms of domain architecture, EGF-like 15; calcium-binding spans 1113-1154 (DIDECSLSDGLCPHGQCVNVIGAFQCSCHAGFQSTPDRQGCV). The EGF-like 16; calcium-binding domain occupies 1155-1195 (DINECRVQNGGCDVHCINTEGSYRCSCGQGYSLMPDGRACA). Residues 1196-1237 (DVDECEENPRVCDQGHCTNMPGGHRCLCYDGFMATPDMRTCV) enclose the EGF-like 17 domain. In terms of domain architecture, EGF-like 18; calcium-binding spans 1238 to 1279 (DVDECDLNPHICLHGDCENTKGSFVCHCQLGYMVRKGATGCS). The region spanning 1280–1320 (DVDECEVGGHNCDSHASCLNIPGSFSCRCLPGWVGDGFECH) is the EGF-like 19; calcium-binding domain. Residues 1321–1361 (DLDECVSQEHRCSPRGDCLNVPGSYRCTCRQGFAGDGFFCE) enclose the EGF-like 20; calcium-binding domain. In terms of domain architecture, EGF-like 21; calcium-binding spans 1362–1403 (DRDECAENVDLCDNGQCLNAPGGYRCECEMGFDPTEDHRACQ). Positions 1404–1444 (DVDECAQGNLCAFGSCENLPGMFRCICNGGYELDRGGGNCT) constitute an EGF-like 22; calcium-binding domain. Asparagine 1442 is a glycosylation site (N-linked (GlcNAc...) asparagine). In terms of domain architecture, EGF-like 23; calcium-binding spans 1445-1485 (DINECADPVNCINGVCINTPGSYLCSCPQDFELNPSGVGCV). The TB 6 domain occupies 1490-1546 (GNCFLETHDRGDSGISCSAEIGVGVTRASCCCSLGRAWGNPCELCPMANTTEYRTLC). Residue asparagine 1538 is glycosylated (N-linked (GlcNAc...) asparagine). In terms of domain architecture, EGF-like 24; calcium-binding spans 1563–1604 (DIDECQELPGLCQGGDCVNTFGSFQCECPPGYHLSEHTRICE). 6 cysteine pairs are disulfide-bonded: cysteine 1567–cysteine 1579, cysteine 1574–cysteine 1588, cysteine 1590–cysteine 1603, cysteine 1609–cysteine 1621, cysteine 1616–cysteine 1630, and cysteine 1632–cysteine 1645. The 42-residue stretch at 1605 to 1646 (DIDECSTHSGICGPGTCYNTLGNYTCVCPAEYLQVNGGNNCM) folds into the EGF-like 25; calcium-binding domain. Asparagine 1627 carries an N-linked (GlcNAc...) asparagine glycan. In terms of domain architecture, TB 7 spans 1651-1703 (SVCFRHYNGTCQNELAFNVTRKMCCCSYNIGQAWNRPCEACPTPISPDYQILC). Residues asparagine 1658 and asparagine 1668 are each glycosylated (N-linked (GlcNAc...) asparagine). The region spanning 1721–1762 (DIDECGEIPAICANGICINQIGSFRCECPAGFNYNSILLACE) is the EGF-like 26; calcium-binding domain. Cystine bridges form between cysteine 1725–cysteine 1737, cysteine 1732–cysteine 1746, cysteine 1748–cysteine 1761, cysteine 1767–cysteine 1780, cysteine 1774–cysteine 1789, cysteine 1791–cysteine 1803, cysteine 1809–cysteine 1821, cysteine 1816–cysteine 1830, cysteine 1832–cysteine 1845, cysteine 1851–cysteine 1861, cysteine 1856–cysteine 1870, cysteine 1872–cysteine 1884, cysteine 1890–cysteine 1903, cysteine 1898–cysteine 1912, cysteine 1914–cysteine 1927, cysteine 1933–cysteine 1945, cysteine 1940–cysteine 1954, cysteine 1956–cysteine 1967, cysteine 1973–cysteine 1985, cysteine 1980–cysteine 1994, and cysteine 1996–cysteine 2009. The 42-residue stretch at 1763 to 1804 (DVDECGSRESPCQQNADCINIPGSYRCKCTRGYKLSPGGACV) folds into the EGF-like 27; calcium-binding domain. Residues 1805–1846 (GRNECREIPNVCSHGDCMDTEGSYMCLCHRGFQASADQTLCM) form the EGF-like 28 domain. The EGF-like 29; calcium-binding domain occupies 1847 to 1885 (DIDECDRQPCGNGTCKNIIGSYNCLCFPGFVVTHNGDCV). The N-linked (GlcNAc...) asparagine glycan is linked to asparagine 1858. Positions 1886–1928 (DFDECTTLVGQVCRFGHCLNTAGSFHCLCQDGFELTADGKNCV) constitute an EGF-like 30; calcium-binding domain. The 40-residue stretch at 1929–1968 (DTNECLSLAGTCLPGTCQNLEGSFRCICPPGFQVQSDHCI) folds into the EGF-like 31; calcium-binding domain. The 42-residue stretch at 1969–2010 (DIDECSEEPNLCLFGTCTNSPGSFQCLCPPGFVLSDNGHRCF) folds into the EGF-like 32; calcium-binding domain. Residues 2015–2068 (SFCFTRFEAGKCSVPKAFNTTKTRCCCSKRPGEGWGDPCELCPQEGSAAFQELC) form the TB 8 domain. The N-linked (GlcNAc...) asparagine glycan is linked to asparagine 2033. The region spanning 2084–2125 (DVNECAENPGVCTNGVCVNTDGSFRCECPFGYSLDFTGINCV) is the EGF-like 33; calcium-binding domain. Disulfide bonds link cysteine 2088-cysteine 2100, cysteine 2095-cysteine 2109, cysteine 2111-cysteine 2124, cysteine 2130-cysteine 2141, cysteine 2136-cysteine 2150, cysteine 2152-cysteine 2164, cysteine 2170-cysteine 2181, cysteine 2177-cysteine 2190, cysteine 2192-cysteine 2205, cysteine 2211-cysteine 2225, cysteine 2218-cysteine 2234, cysteine 2236-cysteine 2250, cysteine 2256-cysteine 2268, cysteine 2263-cysteine 2277, and cysteine 2279-cysteine 2292. Residues 2126-2165 (DTDECSVGHPCGQGTCTNVIGGFECACADGFEPGLMMTCE) enclose the EGF-like 34; calcium-binding domain. In terms of domain architecture, EGF-like 35; calcium-binding spans 2166 to 2206 (DIDECSLNPLLCAFRCHNTEGSYLCTCPAGYTLREDGAMCR). The EGF-like 36; calcium-binding domain maps to 2207 to 2251 (DVDECADGQQDCHARGMECKNLIGTFACVCPPGMRPLPGSGEGCT). The EGF-like 37; calcium-binding domain occupies 2252–2293 (DDNECHAQPDLCVNGRCVNTAGSFRCDCDEGFQPSPTLTECH). The TB 9 domain maps to 2298 to 2351 (GPCFAEVLQTMCRSLSSSSEAVTRAECCCGGGRGWGPRCELCPLPGTSAYRKLC). In terms of domain architecture, EGF-like 38; calcium-binding spans 2363–2404 (DVDECRMLAHLCAHGECINSLGSFRCHCQAGYTPDATATTCL). Cystine bridges form between cysteine 2367-cysteine 2379, cysteine 2374-cysteine 2388, cysteine 2390-cysteine 2403, cysteine 2409-cysteine 2420, cysteine 2416-cysteine 2429, cysteine 2431-cysteine 2444, cysteine 2450-cysteine 2461, cysteine 2457-cysteine 2470, cysteine 2472-cysteine 2483, cysteine 2489-cysteine 2502, cysteine 2496-cysteine 2511, cysteine 2513-cysteine 2526, cysteine 2532-cysteine 2542, cysteine 2538-cysteine 2551, cysteine 2553-cysteine 2566, cysteine 2572-cysteine 2584, cysteine 2579-cysteine 2593, cysteine 2595-cysteine 2608, cysteine 2614-cysteine 2625, cysteine 2621-cysteine 2634, and cysteine 2636-cysteine 2648. Residues 2405–2445 (DMDECSQVPKPCTFLCKNTKGSFLCSCPRGYLLEEDGRTCK) form the EGF-like 39; calcium-binding domain. One can recognise an EGF-like 40; calcium-binding domain in the interval 2446-2484 (DLDECTSRQHNCQFLCVNTVGAFTCRCPPGFTQHHQACF). Positions 2485–2527 (DNDECSAQPGPCGAHGHCHNTPGSFRCECHQGFTLVSSGHGCE) constitute an EGF-like 41; calcium-binding domain. Residues 2528–2567 (DVNECDGPHRCQHGCQNQLGGYRCSCPQGFTQHSQWAQCV) enclose the EGF-like 42; calcium-binding domain. An EGF-like 43; calcium-binding domain is found at 2568–2609 (DENECALSPPTCGSASCRNTLGGFRCVCPSGFDFDQALGGCQ). One can recognise an EGF-like 44; calcium-binding domain in the interval 2610-2649 (EVDECAGRRGPCSYSCANTPGGFLCGCPQGYFRAGQGHCV). The N-linked (GlcNAc...) asparagine glycan is linked to asparagine 2713.

It belongs to the fibrillin family. In terms of processing, probably forms intermolecular disulfide bonds either with other FBN3 molecules or with other components of the microfibrils. Predominantly expressed in connective tissues such as skeletal muscle, tendon, skin, perichondrium and periosteum. Highly expressed in fetal lung, brain, kidney. Expressed at low level in prostate, testis, mammary gland, uterus, ovary, placenta, bladder, adrenal gland, thyroid, fetal thymus, fetal liver, liver, fetal heart and heart.

It localises to the secreted. Its subcellular location is the extracellular space. It is found in the extracellular matrix. Its function is as follows. Fibrillins are structural components of 10-12 nm extracellular calcium-binding microfibrils, which occur either in association with elastin or in elastin-free bundles. Fibrillin-containing microfibrils provide long-term force bearing structural support. In Homo sapiens (Human), this protein is Fibrillin-3 (FBN3).